A 182-amino-acid chain; its full sequence is Large ribosomal subunit protein uL5 (182 aa).

Belongs to the universal ribosomal protein uL5 family. In terms of assembly, part of the 50S ribosomal subunit; part of the 5S rRNA/L5/L18/L25 subcomplex. Contacts the 5S rRNA and the P site tRNA. Forms a bridge to the 30S subunit in the 70S ribosome.

Functionally, this is one of the proteins that bind and probably mediate the attachment of the 5S RNA into the large ribosomal subunit, where it forms part of the central protuberance. In the 70S ribosome it contacts protein S13 of the 30S subunit (bridge B1b), connecting the 2 subunits; this bridge is implicated in subunit movement. Contacts the P site tRNA; the 5S rRNA and some of its associated proteins might help stabilize positioning of ribosome-bound tRNAs. The chain is Large ribosomal subunit protein uL5 from Borrelia garinii subsp. bavariensis (strain ATCC BAA-2496 / DSM 23469 / PBi) (Borreliella bavariensis).